Reading from the N-terminus, the 97-residue chain is ESAT-6-like protein EsxA (97 aa).

The protein belongs to the WXG100 family. ESAT-6 subfamily. Forms a tight 1:1 complex with EsxB. Forms a complex with EccC and EsxB, probably wholly mediated by EsxB.

It is found in the secreted. Functionally, may help regulate assembly and function of the type VII secretion system (T7SS). EsxA disassembles pre-formed EccC-EsxB multimers, possibly by making EccC-EsxA-EsxB trimers instead of EccC-EsxB-EsxB-EccC tetramers. In Thermomonospora curvata (strain ATCC 19995 / DSM 43183 / JCM 3096 / KCTC 9072 / NBRC 15933 / NCIMB 10081 / Henssen B9), this protein is ESAT-6-like protein EsxA.